The primary structure comprises 157 residues: Protein Smg homolog (157 aa).

This sequence belongs to the Smg family.

This is Protein Smg homolog from Xanthomonas euvesicatoria pv. vesicatoria (strain 85-10) (Xanthomonas campestris pv. vesicatoria).